The sequence spans 453 residues: Plasmepsin II (453 aa).

The Cytoplasmic segment spans residues 1-37; the sequence is MDITVREHDFKHGFIKSNSTFDGLNIDNSKNKKKIQK. A propeptide spanning residues 1–124 is cleaved from the precursor; sequence MDITVREHDF…SGLTKTNYLG (124 aa). Residues 38 to 58 traverse the membrane as a helical; Signal-anchor for type II membrane protein segment; the sequence is GFQILYVLLFCSVMCGLFYYV. Topologically, residues 59-453 are lumenal; that stretch reads YENVWLQRDN…VGIALAKKNL (395 aa). Residues 140-447 enclose the Peptidase A1 domain; the sequence is FYGDAEVGDN…DYDNHSVGIA (308 aa). Residue aspartate 158 is part of the active site. Cysteines 171 and 176 form a disulfide. Aspartate 338 is a catalytic residue. Cysteine 373 and cysteine 409 form a disulfide bridge.

The protein belongs to the peptidase A1 family. Component of the hemozoin formation complex (HFC) composed of falcipains FP2A and/or FP2B, plasmepsins PMII, PMIII/HAP and PMIV, heme detoxifying protein HDP and falcilysin FLN. The HFC complex is involved in hemoglobin degradation and detoxification of heme in the food vacuole during the asexual blood stage. Post-translationally, not N-glycosylated. In terms of processing, proteolytically cleaved into the soluble active mature form in the digestive vacuole by cysteine protease falcipains; the process begins at the early ring stage. Proteolysis requires an acidic environment. In absence of falcipains, autoprocessing may serve as an alternate activation system.

It is found in the membrane. The protein localises to the vacuole lumen. Its subcellular location is the vacuole membrane. The catalysed reaction is Hydrolysis of the bonds linking certain hydrophobic residues in hemoglobin or globin. Also cleaves small molecules substrates such as Ala-Leu-Glu-Arg-Thr-Phe-|-Phe(NO2)-Ser-Phe-Pro-Thr.. Inhibited by pepstatin A. Its function is as follows. During the asexual blood stage, participates in initial cleavage of native host hemoglobin (Hb) resulting in Hb denaturation. May cleave preferentially denatured hemoglobin that has been cleaved by PMI. Digestion of host Hb is an essential step which provides the parasite with amino acids for protein synthesis, and regulates osmolarity. The sequence is that of Plasmepsin II from Plasmodium falciparum (isolate HB3).